The primary structure comprises 246 residues: Phosphomannomutase (246 aa).

The Nucleophile role is filled by aspartate 13. Positions 13 and 15 each coordinate Mg(2+). The active-site Proton donor/acceptor is aspartate 15. Residues arginine 22, arginine 124, arginine 135, arginine 142, serine 180, and aspartate 182 each coordinate alpha-D-mannose 1-phosphate. Aspartate 208, tyrosine 220, and threonine 225 together coordinate Mg(2+).

This sequence belongs to the eukaryotic PMM family. In terms of assembly, homodimer. Mg(2+) serves as cofactor. In terms of tissue distribution, expressed in roots, stems, leaves, flowers and immature fruits.

The protein localises to the cytoplasm. It catalyses the reaction alpha-D-mannose 1-phosphate = D-mannose 6-phosphate. The protein operates within nucleotide-sugar biosynthesis; GDP-alpha-D-mannose biosynthesis; alpha-D-mannose 1-phosphate from D-fructose 6-phosphate: step 2/2. Its function is as follows. Catalyzes the interconversion of mannose-6-phosphate to mannose-1-phosphate, the precursor for the synthesis of GDP-mannose. GDP-mannose is an essential sugar nucleotide for the synthesis of D-mannose-containing cell wall polysaccharides (galactomannans and glucomannans), glycolipids, glycoproteins and the antioxidant L-ascorbate. Can complement the yeast temperature-sensitive mutant sec53-6. In Arabidopsis thaliana (Mouse-ear cress), this protein is Phosphomannomutase.